An 82-amino-acid chain; its full sequence is uncharacterized protein (82 aa).

Functionally, could be a silencing control element for the regulation of the restriction system. This is an uncharacterized protein from Herpetosiphon aurantiacus (Herpetosiphon giganteus).